A 103-amino-acid polypeptide reads, in one-letter code: Small ribosomal subunit protein uS10 (103 aa).

This sequence belongs to the universal ribosomal protein uS10 family. As to quaternary structure, part of the 30S ribosomal subunit.

Involved in the binding of tRNA to the ribosomes. This Mycoplasmopsis pulmonis (strain UAB CTIP) (Mycoplasma pulmonis) protein is Small ribosomal subunit protein uS10.